The following is a 314-amino-acid chain: Olfactory receptor 51I1 (314 aa).

The Extracellular portion of the chain corresponds to 1 to 27 (MLGLNGTPFQPATLQLTGIPGIQTGLT). The chain crosses the membrane as a helical span at residues 28-48 (WVALIFCILYMISIVGNLSIL). Residues 49 to 56 (TLVFWEPA) lie on the Cytoplasmic side of the membrane. The helical transmembrane segment at 57–77 (LHQPMYYFLSMLALNDLGVSF) threads the bilayer. Residues 78–101 (STLPTVISTFCFNYNHVAFNACLV) are Extracellular-facing. A disulfide bridge links Cys-99 with Cys-191. A helical membrane pass occupies residues 102 to 122 (QMFFIHTFSFMESGILLAMSL). Topologically, residues 123-141 (DRFVAICYPLRYVTVLTHN) are cytoplasmic. A helical membrane pass occupies residues 142–162 (RILAMGLGILTKSFTTLFPFP). At 163-198 (FVVKRLPFCKGNVLHHSYCLHPDLMKVACGDIHVNN) the chain is on the extracellular side. Residues 199-219 (IYGLLVIIFTYGMDSTFILLS) form a helical membrane-spanning segment. The Cytoplasmic segment spans residues 220–239 (YALILRAMLVIISQEQRLKA). A helical transmembrane segment spans residues 240 to 260 (LNTCMSHICAVLAFYVPIIAV). The Extracellular segment spans residues 261 to 275 (SMIHRFWKSAPPVVH). A helical membrane pass occupies residues 276 to 296 (VMMSNVYLFVPPMLNPIIYSV). At 297–314 (KTKEIRKGILKFFHKSQA) the chain is on the cytoplasmic side.

It belongs to the G-protein coupled receptor 1 family.

It is found in the cell membrane. Odorant receptor. This Homo sapiens (Human) protein is Olfactory receptor 51I1 (OR51I1).